The primary structure comprises 475 residues: Putative aldehyde dehydrogenase SERP1729 (475 aa).

201 to 207 provides a ligand contact to NAD(+); sequence GDGSGVG. Residues glutamate 245 and cysteine 279 contribute to the active site.

This sequence belongs to the aldehyde dehydrogenase family.

It catalyses the reaction an aldehyde + NAD(+) + H2O = a carboxylate + NADH + 2 H(+). The sequence is that of Putative aldehyde dehydrogenase SERP1729 from Staphylococcus epidermidis (strain ATCC 35984 / DSM 28319 / BCRC 17069 / CCUG 31568 / BM 3577 / RP62A).